A 376-amino-acid chain; its full sequence is Queuine tRNA-ribosyltransferase (376 aa).

D93 functions as the Proton acceptor in the catalytic mechanism. Substrate-binding positions include 93–97, D147, Q190, and G217; that span reads DSGGF. The RNA binding stretch occupies residues 248-254; the sequence is GVGKPGD. The active-site Nucleophile is D267. Zn(2+)-binding residues include C305, C307, C310, and H336.

It belongs to the queuine tRNA-ribosyltransferase family. In terms of assembly, homodimer. Within each dimer, one monomer is responsible for RNA recognition and catalysis, while the other monomer binds to the replacement base PreQ1. Requires Zn(2+) as cofactor.

It carries out the reaction 7-aminomethyl-7-carbaguanine + guanosine(34) in tRNA = 7-aminomethyl-7-carbaguanosine(34) in tRNA + guanine. It functions in the pathway tRNA modification; tRNA-queuosine biosynthesis. Its function is as follows. Catalyzes the base-exchange of a guanine (G) residue with the queuine precursor 7-aminomethyl-7-deazaguanine (PreQ1) at position 34 (anticodon wobble position) in tRNAs with GU(N) anticodons (tRNA-Asp, -Asn, -His and -Tyr). Catalysis occurs through a double-displacement mechanism. The nucleophile active site attacks the C1' of nucleotide 34 to detach the guanine base from the RNA, forming a covalent enzyme-RNA intermediate. The proton acceptor active site deprotonates the incoming PreQ1, allowing a nucleophilic attack on the C1' of the ribose to form the product. After dissociation, two additional enzymatic reactions on the tRNA convert PreQ1 to queuine (Q), resulting in the hypermodified nucleoside queuosine (7-(((4,5-cis-dihydroxy-2-cyclopenten-1-yl)amino)methyl)-7-deazaguanosine). The sequence is that of Queuine tRNA-ribosyltransferase from Dinoroseobacter shibae (strain DSM 16493 / NCIMB 14021 / DFL 12).